The primary structure comprises 215 residues: Redox-sensing transcriptional repressor Rex (215 aa).

The segment at residues 18-57 (LYYRFLKNLHASGKQRVSSAELSDAVKVDSATIRRDFSYF) is a DNA-binding region (H-T-H motif). 92-97 (GVGNLG) provides a ligand contact to NAD(+).

This sequence belongs to the transcriptional regulatory Rex family. In terms of assembly, homodimer.

It is found in the cytoplasm. In terms of biological role, modulates transcription in response to changes in cellular NADH/NAD(+) redox state. The protein is Redox-sensing transcriptional repressor Rex of Bacillus velezensis (strain DSM 23117 / BGSC 10A6 / LMG 26770 / FZB42) (Bacillus amyloliquefaciens subsp. plantarum).